A 203-amino-acid polypeptide reads, in one-letter code: Endo-type membrane-bound lytic murein transglycosylase A (203 aa).

A signal peptide spans 1 to 15 (MKLRWFAFLIVLLAG). Cys16 carries the N-palmitoyl cysteine lipid modification. A lipid anchor (S-diacylglycerol cysteine) is attached at Cys16.

It belongs to the transglycosylase Slt family.

The protein resides in the cell outer membrane. It carries out the reaction Endolytic cleavage of the (1-&gt;4)-beta-glycosidic linkage between N-acetylmuramic acid (MurNAc) and N-acetylglucosamine (GlcNAc) residues in peptidoglycan with concomitant formation of a 1,6-anhydrobond in the MurNAc residue.. In terms of biological role, murein-degrading enzyme. May play a role in recycling of muropeptides during cell elongation and/or cell division. Preferentially cleaves at a distance of more than two disaccharide units from the ends of the glycan chain. The polypeptide is Endo-type membrane-bound lytic murein transglycosylase A (Escherichia coli O1:K1 / APEC).